Reading from the N-terminus, the 343-residue chain is GTPase Obg (343 aa).

Positions 1 to 159 (MKFLDQAKIY…RWVWLRLKLI (159 aa)) constitute an Obg domain. The OBG-type G domain occupies 160-328 (ADAGLVGLPN…LLRQVMTYVA (169 aa)). Residues 166–173 (GLPNAGKS), 191–195 (FTTLH), 213–216 (DIPG), 280–283 (NKCD), and 309–311 (SGV) each bind GTP. 2 residues coordinate Mg(2+): serine 173 and threonine 193.

This sequence belongs to the TRAFAC class OBG-HflX-like GTPase superfamily. OBG GTPase family. As to quaternary structure, monomer. Mg(2+) is required as a cofactor.

Its subcellular location is the cytoplasm. An essential GTPase which binds GTP, GDP and possibly (p)ppGpp with moderate affinity, with high nucleotide exchange rates and a fairly low GTP hydrolysis rate. Plays a role in control of the cell cycle, stress response, ribosome biogenesis and in those bacteria that undergo differentiation, in morphogenesis control. This is GTPase Obg from Granulibacter bethesdensis (strain ATCC BAA-1260 / CGDNIH1).